We begin with the raw amino-acid sequence, 141 residues long: Translation initiation factor IF-1, chloroplastic (141 aa).

A chloroplast-targeting transit peptide spans 1–46 (MLQLCSTFRPQLLLPCQFRFTNGVLIPQINYVASNSVVNIRPMIRC). The segment at 49–69 (ASGGRGGANRSKPAKPQVKEG) is disordered. The S1-like domain maps to 63–138 (KPQVKEGSNK…TKGRIIFRMS (76 aa)).

This sequence belongs to the IF-1 family. As to quaternary structure, component of the 30S ribosomal translation pre-initiation complex which assembles on the 30S ribosome in the order IF-2 and IF-3, IF-1 and N-formylmethionyl-tRNA(fMet); mRNA recruitment can occur at any time during PIC assembly.

The protein resides in the plastid. Its subcellular location is the chloroplast. In terms of biological role, one of the essential components for the initiation of protein synthesis. Stabilizes the binding of IF-2 and IF-3 on the 30S subunit to which N-formylmethionyl-tRNA(fMet) subsequently binds. Helps modulate mRNA selection, yielding the 30S pre-initiation complex (PIC). Upon addition of the 50S ribosomal subunit IF-1, IF-2 and IF-3 are released leaving the mature 70S translation initiation complex. The polypeptide is Translation initiation factor IF-1, chloroplastic (Arabidopsis thaliana (Mouse-ear cress)).